Here is a 346-residue protein sequence, read N- to C-terminus: GTPase Obg (346 aa).

Positions 1–159 constitute an Obg domain; it reads MRFVDEVTFV…RELRLELQLL (159 aa). The tract at residues 128–148 is disordered; it reads LHFKSSTNRAPRQSTEGTAGE. Residues 130 to 144 are compositionally biased toward polar residues; it reads FKSSTNRAPRQSTEG. The OBG-type G domain maps to 160-335; the sequence is ADVGLLGMPN…LCGDIMNDLE (176 aa). GTP-binding positions include 166 to 173, 191 to 195, 213 to 216, 285 to 288, and 316 to 318; these read GMPNVGKS, FTTLY, DIPG, NRLD, and SGL. Mg(2+) contacts are provided by serine 173 and threonine 193.

Belongs to the TRAFAC class OBG-HflX-like GTPase superfamily. OBG GTPase family. Monomer. It depends on Mg(2+) as a cofactor.

The protein localises to the cytoplasm. Functionally, an essential GTPase which binds GTP, GDP and possibly (p)ppGpp with moderate affinity, with high nucleotide exchange rates and a fairly low GTP hydrolysis rate. Plays a role in control of the cell cycle, stress response, ribosome biogenesis and in those bacteria that undergo differentiation, in morphogenesis control. The sequence is that of GTPase Obg from Halorhodospira halophila (strain DSM 244 / SL1) (Ectothiorhodospira halophila (strain DSM 244 / SL1)).